Consider the following 158-residue polypeptide: Putative 8-oxo-dGTP diphosphatase YtkD (158 aa).

A Nudix hydrolase domain is found at 6–145 (DYYQNTVQLS…SFIMKDSVLP (140 aa)). A Nudix box motif is present at residues 53-74 (GKVEPMECAEEAALREVKEETG). Mg(2+) is bound by residues Glu-68 and Glu-72.

The protein belongs to the Nudix hydrolase family. Mg(2+) is required as a cofactor.

It catalyses the reaction 8-oxo-dGTP + H2O = 8-oxo-dGMP + diphosphate + H(+). Its activity is regulated as follows. Not induced by oxidative damage (following treatment with paraquat or hydrogen peroxide). Not induced by mitomycin C. Not induced by sigma-B general stress inducers such as sodium chloride, ethanol or heat. In terms of biological role, involved in the GO system responsible for removing an oxidatively damaged form of guanine (7,8-dihydro-8-oxoguanine, 8-oxo-dGTP) from DNA and the nucleotide pool. 8-oxo-dGTP is inserted opposite dA and dC residues of template DNA with almost equal efficiency thus leading to A.T to G.C transversions. Functions, in conjunction with MutT, to protect vegetatively growing cells from DNA-damaging agents such as H(2)O(2) or t-BHP (t-butylhydroperoxide). The 2 proteins do not however protect spores. According to PubMed:15576788, phosphohydrolase that catalyzes the hydrolysis of all common nucleoside triphosphates as well as of the mutagenic analog 8-oxo-dGTP. The high catalytic efficiency on dGTP is in contrast to results from PubMed:14761999. According to PubMed:14761999, catalyzes the hydrolysis of 8-oxo-dGTP with a specific activity 413 times higher than that exhibited against dGTP. Preferentially catalyzes the hydrolysis of 8-oxo-dGTP and 8-oxo-GTP. According to PubMed:15576788, hydrolyzes nucleoside triphosphates in a stepwise fashion through the diphosphate to the monophosphate, releasing two molecules of inorganic orthophosphate. The chain is Putative 8-oxo-dGTP diphosphatase YtkD (ytkD) from Bacillus subtilis (strain 168).